Consider the following 371-residue polypeptide: Cytochrome b (371 aa).

The next 4 membrane-spanning stretches (helical) occupy residues 25 to 45, 69 to 90, 105 to 125, and 170 to 190; these read FGSM…FLAV, WMMQ…YIHI, WMSG…GYVL, and FFAL…LHII. The heme b site is built by H75 and H89. Residues H174 and H188 each coordinate heme b. A ubiquinone is bound at residue H193. Transmembrane regions (helical) follow at residues 218–238, 280–300, 312–332, and 339–358; these read HKDL…VSFS, LGGA…PFTH, LSQL…WAAT, and FIII…LSIP.

It belongs to the cytochrome b family. The cytochrome bc1 complex contains 3 respiratory subunits (MT-CYB, CYC1 and UQCRFS1), 2 core proteins (UQCRC1 and UQCRC2) and probably 6 low-molecular weight proteins. Heme b serves as cofactor.

The protein localises to the mitochondrion inner membrane. Functionally, component of the ubiquinol-cytochrome c reductase complex (complex III or cytochrome b-c1 complex) that is part of the mitochondrial respiratory chain. The b-c1 complex mediates electron transfer from ubiquinol to cytochrome c. Contributes to the generation of a proton gradient across the mitochondrial membrane that is then used for ATP synthesis. This is Cytochrome b (MT-CYB) from Antaresia childreni (Children's python).